The chain runs to 553 residues: Cytokine-like nuclear factor N-PAC (553 aa).

A PWWP domain is found at 8–66 (LGDLVWGKLGRYPPWPGKIVNPPKDLKKPRGKKCFFVKFFGTEDHAWIKVEQLKPYHLH). Basic and acidic residues-rich tracts occupy residues 92–145 (KTKG…EGKK) and 162–182 (RAQD…KDLT). The disordered stretch occupies residues 92 to 188 (KTKGKDQASS…KDLTIPESST (97 aa)). Positions 168-180 (PRKRGRPPKDEKD) form a DNA-binding region, a.T hook. Residues 214-217 (DPHF) form an interaction with histone H3 region. Residues 261 to 553 (GSITPTDKKI…MSAVYRAYIH (293 aa)) form a dehydrogenase domain region. Residues 271–285 (GFLG…IVSN), Thr-362, and Lys-505 contribute to the NAD(+) site.

Belongs to the HIBADH-related family. NP60 subfamily. Homotetramere. Binds to mononucleosomes.

It localises to the nucleus. Its subcellular location is the chromosome. In terms of biological role, cytokine-like nuclear factor with chromatin gene reader activity involved in chromatin modification and regulation of gene expression. Acts as a nucleosome-destabilizing factor that is recruited to genes during transcriptional activation. Recognizes and binds histone H3 without a preference for specific epigenetic markers and also binds DNA. Interacts with KDM1B and promotes its histone demethylase activity by facilitating the capture of H3 tails, they form a multifunctional enzyme complex that modifies transcribed chromatin and facilitates Pol II transcription through nucleosomes. This is Cytokine-like nuclear factor N-PAC (GLYR1) from Gallus gallus (Chicken).